We begin with the raw amino-acid sequence, 356 residues long: Phosphatidylglycerol--prolipoprotein diacylglyceryl transferase (356 aa).

The next 4 helical transmembrane spans lie at isoleucine 24–valine 44, tryptophan 59–isoleucine 79, leucine 103–valine 123, and valine 144–glycine 164. A 1,2-diacyl-sn-glycero-3-phospho-(1'-sn-glycerol) is bound at residue arginine 165. 2 consecutive transmembrane segments (helical) span residues proline 209–glycine 229 and phenylalanine 265–cysteine 285.

The protein belongs to the Lgt family.

The protein resides in the cell membrane. The catalysed reaction is L-cysteinyl-[prolipoprotein] + a 1,2-diacyl-sn-glycero-3-phospho-(1'-sn-glycerol) = an S-1,2-diacyl-sn-glyceryl-L-cysteinyl-[prolipoprotein] + sn-glycerol 1-phosphate + H(+). It participates in protein modification; lipoprotein biosynthesis (diacylglyceryl transfer). Functionally, catalyzes the transfer of the diacylglyceryl group from phosphatidylglycerol to the sulfhydryl group of the N-terminal cysteine of a prolipoprotein, the first step in the formation of mature lipoproteins. The chain is Phosphatidylglycerol--prolipoprotein diacylglyceryl transferase from Malacoplasma penetrans (strain HF-2) (Mycoplasma penetrans).